The following is a 201-amino-acid chain: Homeobox protein goosecoid-2 (201 aa).

Disordered stretches follow at residues 1-55 (MATA…PEAP), 95-124 (PATP…RRTR), and 179-201 (RHQK…KESC). The segment covering 95–106 (PATPSPLTAPRA) has biased composition (low complexity). The segment at residues 123-182 (TRRHRTIFSEEQLQALEALFVQNQYPDVGTRERLAVRIRLREERVEVWFKNRRAKWRHQK) is a DNA-binding region (homeobox).

The protein belongs to the paired homeobox family. Bicoid subfamily. Expressed in adult testis.

The protein localises to the nucleus. Functionally, may have a role in development. May regulate its own transcription. May bind the bicoid consensus sequence TAATCC. In Mus musculus (Mouse), this protein is Homeobox protein goosecoid-2 (Gsc2).